A 173-amino-acid polypeptide reads, in one-letter code: Translation initiation factor IF-3 (173 aa).

Belongs to the IF-3 family. As to quaternary structure, monomer.

Its subcellular location is the cytoplasm. Functionally, IF-3 binds to the 30S ribosomal subunit and shifts the equilibrium between 70S ribosomes and their 50S and 30S subunits in favor of the free subunits, thus enhancing the availability of 30S subunits on which protein synthesis initiation begins. This is Translation initiation factor IF-3 from Caulobacter sp. (strain K31).